A 512-amino-acid polypeptide reads, in one-letter code: Maturase K (512 aa).

It belongs to the intron maturase 2 family. MatK subfamily.

It is found in the plastid. Its subcellular location is the chloroplast. Usually encoded in the trnK tRNA gene intron. Probably assists in splicing its own and other chloroplast group II introns. This chain is Maturase K, found in Amorphophallus titanum (Titan arum).